The following is a 449-amino-acid chain: MRECISIHVGQAGVQIGNACWELYCLEHGIQPDGQMPSDKTIGGGDDSFNTFFSETGAGKHVPRAVFVDLEPTVIDEVRTGTYRQLFHPEQLITGKEDAANNYARGHYTIGKEIIDLVLDRIRKLADQCTGLQGFLVFHSFGGGTGSGFTSLLMERLSVDYGKKSKLEFSIYPAPQVSTAVVEPYNSILTTHTTLEHSDCAFMVDNEAIYDICRRNLDIERPTYTNLNRLISQIVSSITASLRFDGALNVDLTEFQTNLVPYPRIHFPLATYAPVISAEKAYHEQLTVAEITNACFEPANQMVKCDPRHGKYMACCLLYRGDVVPKDVNAAIATIKTKRTIQFVDWCPTGFKVGINYQPPTVVPGGDLAKVQRAVCMLSNTTAVAEAWARLDHKFDLMYAKRAFVHWYVGEGMEEGEFSEAREDMAALEKDYEEVGADSADGEDEGEEY.

The MREC motif signature appears at 1-4 (MREC). Gln11 provides a ligand contact to GTP. The residue at position 40 (Lys40) is an N6-acetyllysine. Residues Glu71, Ser140, Gly144, Thr145, Thr179, Asn206, and Asn228 each coordinate GTP. Glu71 lines the Mg(2+) pocket. Residue Glu254 is part of the active site. The residue at position 282 (Tyr282) is a 3'-nitrotyrosine. A disordered region spans residues 429 to 449 (EKDYEEVGADSADGEDEGEEY). Over residues 431–449 (DYEEVGADSADGEDEGEEY) the composition is skewed to acidic residues. Position 432 is a phosphotyrosine (Tyr432). Ser439 carries the phosphoserine modification. The residue at position 449 (Tyr449) is a 3'-nitrotyrosine.

Belongs to the tubulin family. Dimer of alpha and beta chains. A typical microtubule is a hollow water-filled tube with an outer diameter of 25 nm and an inner diameter of 15 nM. Alpha-beta heterodimers associate head-to-tail to form protofilaments running lengthwise along the microtubule wall with the beta-tubulin subunit facing the microtubule plus end conferring a structural polarity. Microtubules usually have 13 protofilaments but different protofilament numbers can be found in some organisms and specialized cells. Requires Mg(2+) as cofactor. Post-translationally, some glutamate residues at the C-terminus are polyglutamylated, resulting in polyglutamate chains on the gamma-carboxyl group. Polyglutamylation plays a key role in microtubule severing by spastin (SPAST). SPAST preferentially recognizes and acts on microtubules decorated with short polyglutamate tails: severing activity by SPAST increases as the number of glutamates per tubulin rises from one to eight, but decreases beyond this glutamylation threshold. Glutamylation is also involved in cilia motility. Some glutamate residues at the C-terminus are monoglycylated but not polyglycylated due to the absence of functional TTLL10 in human. Monoglycylation is mainly limited to tubulin incorporated into cilia and flagella axonemes, which is required for their stability and maintenance. Flagella glycylation controls sperm motility. Both polyglutamylation and monoglycylation can coexist on the same protein on adjacent residues, and lowering glycylation levels increases polyglutamylation, and reciprocally. In terms of processing, acetylation of alpha chains at Lys-40 is located inside the microtubule lumen. This modification has been correlated with increased microtubule stability, intracellular transport and ciliary assembly. Post-translationally, methylation of alpha chains at Lys-40 is found in mitotic microtubules and is required for normal mitosis and cytokinesis contributing to genomic stability. Nitration of Tyr-449 is irreversible and interferes with normal dynein intracellular distribution. In terms of processing, undergoes a tyrosination/detyrosination cycle, the cyclic removal and re-addition of a C-terminal tyrosine residue by the enzymes tubulin tyrosine carboxypeptidase (MATCAP1/KIAA0895L, VASH1 or VASH2) and tubulin tyrosine ligase (TTL), respectively. Post-translationally, tyrosination promotes microtubule interaction with CAP-Gly domain-containing proteins such as CLIP1, CLIP2 and DCTN1. Tyrosination regulates the initiation of dynein-dynactin motility via interaction with DCTN1, which brings the dynein-dynactin complex into contact with microtubules. In neurons, tyrosinated tubulins mediate the initiation of retrograde vesicle transport. Detyrosination is involved in metaphase plate congression by guiding chromosomes during mitosis: detyrosination promotes interaction with CENPE, promoting pole-proximal transport of chromosomes toward the equator. Detyrosination increases microtubules-dependent mechanotransduction in dystrophic cardiac and skeletal muscle. In cardiomyocytes, detyrosinated microtubules are required to resist to contractile compression during contraction: detyrosination promotes association with desmin (DES) at force-generating sarcomeres, leading to buckled microtubules and mechanical resistance to contraction.

It is found in the cytoplasm. The protein resides in the cytoskeleton. It carries out the reaction GTP + H2O = GDP + phosphate + H(+). Its function is as follows. Tubulin is the major constituent of microtubules, a cylinder consisting of laterally associated linear protofilaments composed of alpha- and beta-tubulin heterodimers. Microtubules grow by the addition of GTP-tubulin dimers to the microtubule end, where a stabilizing cap forms. Below the cap, tubulin dimers are in GDP-bound state, owing to GTPase activity of alpha-tubulin. The chain is Tubulin alpha-1C chain (TUBA1C) from Homo sapiens (Human).